We begin with the raw amino-acid sequence, 130 residues long: Small ribosomal subunit protein uS11c (130 aa).

This sequence belongs to the universal ribosomal protein uS11 family. As to quaternary structure, part of the 30S ribosomal subunit.

Its subcellular location is the plastid. This chain is Small ribosomal subunit protein uS11c, found in Aneura mirabilis (Parasitic liverwort).